The sequence spans 66 residues: Large ribosomal subunit protein bL33c (66 aa).

This sequence belongs to the bacterial ribosomal protein bL33 family.

It localises to the plastid. It is found in the chloroplast. This is Large ribosomal subunit protein bL33c from Saccharum officinarum (Sugarcane).